Reading from the N-terminus, the 137-residue chain is uncharacterized protein (137 aa).

Residues 116-136 (YLSIANLATLLLFGIIGLSII) form a helical membrane-spanning segment.

It is found in the host membrane. This is an uncharacterized protein from His1 virus (isolate Australia/Victoria) (His1V).